A 345-amino-acid chain; its full sequence is Eukaryotic translation initiation factor 3 subunit F (345 aa).

Residues 30 to 166 enclose the MPN domain; it reads VVIQPQAIFS…TRAYISAPVG (137 aa). A disordered region spans residues 310–345; the sequence is EGASAEAGAQRGQRGGKGGRGGQQRTQERASEEVRA. A compositionally biased stretch (low complexity) spans 312-321; that stretch reads ASAEAGAQRG. Residues 322–331 are compositionally biased toward gly residues; that stretch reads QRGGKGGRGG. The span at 335–345 shows a compositional bias: basic and acidic residues; sequence TQERASEEVRA.

The protein belongs to the eIF-3 subunit F family. As to quaternary structure, component of the eukaryotic translation initiation factor 3 (eIF-3) complex.

Its subcellular location is the cytoplasm. Functionally, component of the eukaryotic translation initiation factor 3 (eIF-3) complex, which is involved in protein synthesis of a specialized repertoire of mRNAs and, together with other initiation factors, stimulates binding of mRNA and methionyl-tRNAi to the 40S ribosome. The eIF-3 complex specifically targets and initiates translation of a subset of mRNAs involved in cell proliferation. This is Eukaryotic translation initiation factor 3 subunit F from Aspergillus fumigatus (strain CBS 144.89 / FGSC A1163 / CEA10) (Neosartorya fumigata).